A 658-amino-acid polypeptide reads, in one-letter code: Exoribonuclease 2 (658 aa).

The region spanning 189-530 (REDLTSLYFT…VNHRLIKQVL (342 aa)) is the RNB domain. Positions 576–658 (AVEFDCEIAD…ETRSIVGNII (83 aa)) constitute an S1 motif domain.

This sequence belongs to the RNR ribonuclease family. RNase II subfamily.

Its subcellular location is the cytoplasm. It carries out the reaction Exonucleolytic cleavage in the 3'- to 5'-direction to yield nucleoside 5'-phosphates.. In terms of biological role, involved in mRNA degradation. Hydrolyzes single-stranded polyribonucleotides processively in the 3' to 5' direction. In Actinobacillus pleuropneumoniae serotype 5b (strain L20), this protein is Exoribonuclease 2.